The chain runs to 1414 residues: MVHATACSEIIRAEVAELLGVRADALHPGANLVGQGLDSIRMMSLVGRWRRKGIAVDFATLAATPTIEAWSQLVSAGTGVAPTAVAAPGDAGLSQEGEPFPLAPMQHAMWVGRHDHQQLGGVAGHLYVEFDGARVDPDRLRAAATRLALRHPMLRVQFLPDGTQRIPPAAGSRDFPISVADLRHVAPDVVDQRLAGIRDAKSHQQLDGAVFELALTLLPGERTRLHVDLDMQAADAMSYRILLADLAALYDGREPPALGYTYREYRQAIEAEETLPQPVRDADRDWWAQRIPQLPDPPALPTRAGGERDRRRSTRRWHWLDPQTRDALFARARARGITPAMTLAAAFANVLARWSASSRFLLNLPLFSRQALHPDVDLLVGDFTSSLLLDVDLTGARTAAARAQAVQEALRSAAGHSAYPGLSVLRDLSRHRGTQVLAPVVFTSALGLGDLFCPDVTEQFGTPGWIISQGPQVLLDAQVTEFDGGVLVNWDVREGVFAPGVIDAMFTHQVDELLRLAAGDDAWDAPSPSALPAAQRAVRAALNGRTAAPSTEALHDGFFRQAQQQPDAPAVFASSGDLSYAQLRDQASAVAAALRAAGLRVGDTVAVLGPKTGEQVAAVLGILAAGGVYLPIGVDQPRDRAERILATGSVNLALVCGPPCQVRVPVPTLLLADVLAAAPAEFVPGPSDPTALAYVLFTSGSTGEPKGVEVAHDAAMNTVETFIRHFELGAADRWLALATLECDMSVLDIFAALRSGGAIVVVDEAQRRDPDAWARLIDTYEVTALNFMPGWLDMLLEVGGGRLSSLRAVAVGGDWVRPDLARRLQVQAPSARFAGLGGATETAVHATIFEVQDAANLPPDWASVPYGVPFPNNACRVVADSGDDCPDWVAGELWVSGRGIARGYRGRPELTAERFVEHDGRTWYRTGDLARYWHDGTLEFVGRADHRVKISGYRVELGEIEAALQRLPGVHAAAATVLPGGSDVLAAAVCVDDAGVTAESIRQQLADLVPAHMIPRHVTLLDRIPFTDSGKIDRAEVGALLAAEVERSGDRSAPYAAPRTVLQRALRRIVADILGRANDAVGVHDDFFALGGDSVLATQVVAGIRRWLDSPSLMVADMFAARTIAALAQLLTGREANADRLELVAEVYLEIANMTSADVMAALDPIEQPAQPAFKPWVKRFTGTDKPGAVLVFPHAGGAAAAYRWLAKSLVANDVDTFVVQYPQRADRRSHPAADSIEALALELFEAGDWHLTAPLTLFGHCMGAIVAFEFARLAERNGVPVRALWASSGQAPSTVAASGPLPTADRDVLADMVDLGGTDPVLLEDEEFVELLVPAVKADYRALSGYSCPPDVRIRANIHAVGGNRDHRISREMLTSWETHTSGRFTLSHFDGGHFYLNDHLDAVARMVSADVR.

Residues 5-78 (TACSEIIRAE…AWSQLVSAGT (74 aa)) form the Carrier 1 domain. Serine 39 is subject to O-(pantetheine 4'-phosphoryl)serine. Residues 96–394 (EGEPFPLAPM…SSLLLDVDLT (299 aa)) are condensation/cyclization. An adenylation region spans residues 579–975 (SYAQLRDQAS…RLPGVHAAAA (397 aa)). The 79-residue stretch at 1057–1135 (APRTVLQRAL…ALAQLLTGRE (79 aa)) folds into the Carrier 2 domain. The residue at position 1094 (serine 1094) is an O-(pantetheine 4'-phosphoryl)serine. The segment at 1188 to 1413 (GAVLVFPHAG…AVARMVSADV (226 aa)) is thioesterase.

Belongs to the ATP-dependent AMP-binding enzyme family. MbtB subfamily. It depends on pantetheine 4'-phosphate as a cofactor. In terms of processing, 4'-phosphopantetheine is transferred from CoA to a specific serine in each of the two carrier protein domains, leading to their activation from apo to holo forms.

The protein operates within siderophore biosynthesis; mycobactin biosynthesis. Its function is as follows. Involved in the initial steps of the mycobactin biosynthetic pathway. Putatively couples activated salicylic acid with serine or threonine and cyclizes this precursor to the hydroxyphenyloxazoline ring system present in this class of siderophores. Essential for growth in macrophages. This Mycobacterium tuberculosis (strain ATCC 25618 / H37Rv) protein is Phenyloxazoline synthase MbtB (mbtB).